The chain runs to 245 residues: NAD(P)H-quinone oxidoreductase subunit K (245 aa).

Cys58, Cys59, Cys123, and Cys154 together coordinate [4Fe-4S] cluster.

This sequence belongs to the complex I 20 kDa subunit family. As to quaternary structure, NDH-1 can be composed of about 15 different subunits; different subcomplexes with different compositions have been identified which probably have different functions. [4Fe-4S] cluster serves as cofactor.

The protein resides in the cellular thylakoid membrane. It catalyses the reaction a plastoquinone + NADH + (n+1) H(+)(in) = a plastoquinol + NAD(+) + n H(+)(out). It carries out the reaction a plastoquinone + NADPH + (n+1) H(+)(in) = a plastoquinol + NADP(+) + n H(+)(out). NDH-1 shuttles electrons from an unknown electron donor, via FMN and iron-sulfur (Fe-S) centers, to quinones in the respiratory and/or the photosynthetic chain. The immediate electron acceptor for the enzyme in this species is believed to be plastoquinone. Couples the redox reaction to proton translocation, and thus conserves the redox energy in a proton gradient. Cyanobacterial NDH-1 also plays a role in inorganic carbon-concentration. In Trichormus variabilis (strain ATCC 29413 / PCC 7937) (Anabaena variabilis), this protein is NAD(P)H-quinone oxidoreductase subunit K.